The primary structure comprises 260 residues: CD40 ligand (260 aa).

Residues 1–22 (MIETYSQPSPRSVATGLPASMK) lie on the Cytoplasmic side of the membrane. The chain crosses the membrane as a helical; Signal-anchor for type II membrane protein span at residues 23–46 (IFMYLLTVFLITQMIGSVLFAVYL). Residues 47 to 260 (HRRLDKVEEE…GFSSFGLLKL (214 aa)) are Extracellular-facing. The region spanning 121–260 (IAAHVVSEAN…GFSSFGLLKL (140 aa)) is the THD domain. A disulfide bridge connects residues cysteine 177 and cysteine 217. An N-linked (GlcNAc...) asparagine glycan is attached at asparagine 239.

The protein belongs to the tumor necrosis factor family. Homotrimer. Interacts with CD28. CD40 ligand, soluble form: Exists as either a monomer or a homotrimer. Forms a ternary complex between CD40 and integrins for CD40-CD40LG signaling. In terms of processing, the soluble form derives from the membrane form by proteolytic processing. Specifically expressed on activated CD4+ T-lymphocytes.

Its subcellular location is the cell membrane. The protein localises to the cell surface. It is found in the secreted. Cytokine that acts as a ligand to CD40/TNFRSF5. Costimulates T-cell proliferation and cytokine production. Its cross-linking on T-cells generates a costimulatory signal which enhances the production of IL4 and IL10 in conjunction with the TCR/CD3 ligation and CD28 costimulation. Induces the activation of NF-kappa-B. Induces the activation of kinases MAPK8 and PAK2 in T-cells. Mediates B-cell proliferation in the absence of co-stimulus as well as IgE production in the presence of IL4. Involved in immunoglobulin class switching. In terms of biological role, acts as a ligand for integrins, specifically ITGA5:ITGB1 and ITGAV:ITGB3; both integrins and the CD40 receptor are required for activation of CD40-CD40LG signaling, which have cell-type dependent effects, such as B-cell activation, NF-kappa-B signaling and anti-apoptotic signaling. The sequence is that of CD40 ligand (Cd40lg) from Mus musculus (Mouse).